Reading from the N-terminus, the 291-residue chain is Probable aquaporin PIP2-4 (291 aa).

An N-acetylmethionine modification is found at Met1. The tract at residues Met1–Pro22 is disordered. An N-acetylalanine; in Probable aquaporin PIP2-4, N-terminally processed modification is found at Ala2. Over Ala2–Arg39 the chain is Cytoplasmic. Residue Lys3 is modified to N6,N6-dimethyllysine. A helical transmembrane segment spans residues Ala40–Ile60. Residues Gly61–Asp74 lie on the Extracellular side of the membrane. The helical transmembrane segment at Cys75–Val95 threads the bilayer. At Tyr96–Thr125 the chain is on the cytoplasmic side. The short motif at Asn107 to Ala109 is the NPA 1 element. Residues Val126–Phe146 traverse the membrane as a helical segment. Over Gln147–Lys167 the chain is Extracellular. Residues Gly168–Ala188 form a helical membrane-spanning segment. Over Thr189–Pro201 the chain is Cytoplasmic. A helical transmembrane segment spans residues Val202 to Ile222. The Extracellular portion of the chain corresponds to Thr223 to Trp249. The short motif at Asn228–Ala230 is the NPA 2 element. A helical membrane pass occupies residues Ile250 to Leu270. Residues Arg271–Ala291 lie on the Cytoplasmic side of the membrane. A phosphoserine mark is found at Ser283, Ser286, and Ser289.

This sequence belongs to the MIP/aquaporin (TC 1.A.8) family. PIP (TC 1.A.8.11) subfamily. Expressed in roots.

It is found in the cell membrane. Aquaporins facilitate the transport of water and small neutral solutes across cell membranes. The polypeptide is Probable aquaporin PIP2-4 (PIP2-4) (Arabidopsis thaliana (Mouse-ear cress)).